The sequence spans 359 residues: Transcription elongation factor A N-terminal and central domain-containing protein (359 aa).

The region spanning 1–82 (MSDKNQIIAR…AKWRGFYKST (82 aa)) is the TFIIS N-terminal domain. The disordered stretch occupies residues 84–118 (CKPRQSPKVLHTNANKEESAAVSQDVSQDETSGSS). Positions 104-118 (AVSQDVSQDETSGSS) are enriched in polar residues. The TFIIS central domain maps to 182 to 298 (VRSKCVELLY…EHCLPQSVDG (117 aa)).

The chain is Transcription elongation factor A N-terminal and central domain-containing protein (Tceanc) from Mus musculus (Mouse).